We begin with the raw amino-acid sequence, 475 residues long: Eukaryotic translation initiation factor 2 subunit 3 (475 aa).

A tr-type G domain is found at glutamine 38–arginine 247. Positions glycine 47–serine 54 are G1. Alanine 50–threonine 55 contributes to the GTP binding site. The G2 stretch occupies residues asparagine 75 to lysine 79. The tract at residues aspartate 133–glycine 136 is G3. GTP contacts are provided by residues asparagine 189–aspartate 192 and serine 224–glutamine 226. Residues asparagine 189–aspartate 192 are G4. The segment at serine 224–glutamine 226 is G5. Positions glycine 456–leucine 468 are interacts with CDC123.

It belongs to the TRAFAC class translation factor GTPase superfamily. Classic translation factor GTPase family. EIF2G subfamily. As to quaternary structure, eukaryotic translation initiation factor 2 eIF2 is a heterotrimeric complex composed of an alpha, a beta and a gamma subunit. The factors eIF-1, eIF-2, eIF-3, TIF5/eIF-5 and methionyl-tRNAi form a multifactor complex (MFC) that may bind to the 40S ribosome.

Its subcellular location is the cytoplasm. It is found in the cytosol. The enzyme catalyses GTP + H2O = GDP + phosphate + H(+). As a subunit of eukaryotic initiation factor 2 eIF2, involved in the early steps of protein synthesis. In the presence of GTP, eIF-2 forms a ternary complex with initiator tRNA Met-tRNAi and then recruits the 40S ribosomal complex and initiation factors eIF-1, eIF-1A and eIF-3 to form the 43S pre-initiation complex (43S PIC), a step that determines the rate of protein translation. The 43S PIC binds to mRNA and scans downstream to the initiation codon, where it forms a 48S initiation complex by codon-anticodon base pairing. This leads to the displacement of eIF-1 to allow GTPase-activating protein (GAP) eIF-5-mediated hydrolysis of eIF2-bound GTP. Hydrolysis of GTP and release of Pi, which makes GTP hydrolysis irreversible, causes the release of the eIF-2-GDP binary complex from the 40S subunit, an event that is essential for the subsequent joining of the 60S ribosomal subunit to form an elongation-competent 80S ribosome. In order for eIF-2 to recycle and catalyze another round of initiation, the GDP bound to eIF-2 must be exchanged with GTP by way of a reaction catalyzed by GDP-GTP exchange factor (GEF) eIF-2B. The sequence is that of Eukaryotic translation initiation factor 2 subunit 3 from Drosophila melanogaster (Fruit fly).